The following is a 226-amino-acid chain: MMQRKIKSYVLRAGRISNRQQQGLDLWLEDYELKFDSPTPWNFAKEFGRHDADTIVEIGFGMGTSLFAMAMNNPQCNYLGIEVHKAGVGSLVADLHEYQISNVRVVVHDAVEVLQTKIPENSLAGVQIFFPDPWHKKRHHKRRLIQSEFIQMLVKKIRPSGFIHCATDWEDYAEHILNVLSSESALFNQQKEGGYSPRPDSRPLTKFELRGERLGHGVWDLVFIKK.

Residues E57, E82, D109, and D132 each coordinate S-adenosyl-L-methionine. D132 is a catalytic residue. Residues K136, D168, and 205–208 contribute to the substrate site; that span reads TKFE.

It belongs to the class I-like SAM-binding methyltransferase superfamily. TrmB family.

It carries out the reaction guanosine(46) in tRNA + S-adenosyl-L-methionine = N(7)-methylguanosine(46) in tRNA + S-adenosyl-L-homocysteine. The protein operates within tRNA modification; N(7)-methylguanine-tRNA biosynthesis. Functionally, catalyzes the formation of N(7)-methylguanine at position 46 (m7G46) in tRNA. The protein is tRNA (guanine-N(7)-)-methyltransferase of Legionella pneumophila subsp. pneumophila (strain Philadelphia 1 / ATCC 33152 / DSM 7513).